The sequence spans 139 residues: uncharacterized protein (139 aa).

An HIT domain is found at 3 to 110 (IFCNIVEGRD…VPTWSQDPDI (108 aa)). Positions 95–99 (HSHFH) match the Histidine triad motif motif.

This is an uncharacterized protein from Saccharolobus solfataricus (strain ATCC 35092 / DSM 1617 / JCM 11322 / P2) (Sulfolobus solfataricus).